Here is a 376-residue protein sequence, read N- to C-terminus: uncharacterized protein (376 aa).

Belongs to the glycosyltransferase 28 family.

This is an uncharacterized protein from Methanosarcina mazei (strain ATCC BAA-159 / DSM 3647 / Goe1 / Go1 / JCM 11833 / OCM 88) (Methanosarcina frisia).